Consider the following 453-residue polypeptide: Glucose N-acetyltransferase 1-B (453 aa).

The Cytoplasmic segment spans residues methionine 1–tyrosine 8. A helical; Signal-anchor for type II membrane protein membrane pass occupies residues leucine 9–phenylalanine 29. The Lumenal portion of the chain corresponds to glutamine 30–asparagine 453. 3 N-linked (GlcNAc...) asparagine glycosylation sites follow: asparagine 108, asparagine 126, and asparagine 176. Residues aspartate 187–aspartate 189 carry the DXD motif.

This sequence belongs to the GNT1 family.

Its subcellular location is the golgi apparatus membrane. It localises to the vacuole membrane. In terms of biological role, N-acetylglucosaminyltransferase involved in the Golgi-specific modification of N-linked glycans. This chain is Glucose N-acetyltransferase 1-B (GNT1-B), found in Kluyveromyces lactis (strain ATCC 8585 / CBS 2359 / DSM 70799 / NBRC 1267 / NRRL Y-1140 / WM37) (Yeast).